A 1256-amino-acid chain; its full sequence is Protein transport protein SEC31 (1256 aa).

WD repeat units lie at residues isoleucine 7 to glutamate 47, serine 66 to serine 110, lysine 119 to arginine 159, alanine 165 to threonine 205, phenylalanine 209 to alanine 241, and histidine 242 to arginine 281. A WD 7; interaction with SEC13 repeat occupies alanine 368 to serine 390. 2 disordered regions span residues glutamate 460–serine 481 and lysine 761–isoleucine 1139. Low complexity-rich tracts occupy residues arginine 765–proline 809 and glutamine 833–glutamine 862. The segment covering glycine 944–threonine 968 has biased composition (pro residues). 2 stretches are compositionally biased toward low complexity: residues serine 969–proline 978 and alanine 1023–serine 1041. Residues methionine 1046–glutamine 1058 show a composition bias toward pro residues. The segment covering proline 1061–alanine 1082 has biased composition (low complexity). Over residues valine 1083–arginine 1111 the composition is skewed to pro residues. Residues proline 1123–proline 1132 show a composition bias toward low complexity.

This sequence belongs to the WD repeat SEC31 family. As to quaternary structure, the COPII coat is composed of at least 5 proteins: the SEC23/24 complex, the SEC13/31 complex, and the protein SAR1. SEC13 and SEC31 make a 2:2 tetramer that forms the edge element of the COPII outer coat. The tetramer self-assembles in multiple copies to form the complete polyhedral cage. Interacts (via WD 7) with SEC13.

It is found in the cytoplasmic vesicle. Its subcellular location is the COPII-coated vesicle membrane. The protein localises to the endoplasmic reticulum membrane. In terms of biological role, component of the coat protein complex II (COPII) which promotes the formation of transport vesicles from the endoplasmic reticulum (ER). The coat has two main functions, the physical deformation of the endoplasmic reticulum membrane into vesicles and the selection of cargo molecules. The chain is Protein transport protein SEC31 (SEC31) from Phaeosphaeria nodorum (strain SN15 / ATCC MYA-4574 / FGSC 10173) (Glume blotch fungus).